We begin with the raw amino-acid sequence, 213 residues long: Ferric nitrobindin-like protein (213 aa).

The interval 17–42 is disordered; it reads VNLAAEQSKSTSDKNLPEFGDMPIPD. Positions 65–71 match the GXWXGXG motif; sequence GVWRGQG.

Belongs to the nitrobindin family.

The sequence is that of Ferric nitrobindin-like protein from Corynebacterium jeikeium (strain K411).